A 510-amino-acid polypeptide reads, in one-letter code: Glycerol kinase (510 aa).

Threonine 14 is a binding site for ADP. 2 residues coordinate ATP: threonine 14 and threonine 15. Residue threonine 14 participates in sn-glycerol 3-phosphate binding. Arginine 18 contributes to the ADP binding site. The sn-glycerol 3-phosphate site is built by arginine 84, glutamate 85, tyrosine 136, and aspartate 256. Positions 84, 85, 136, 256, and 257 each coordinate glycerol. ADP is bound by residues threonine 278, glycine 322, glycine 422, and asparagine 426. Positions 278, 322, and 422 each coordinate ATP.

The protein belongs to the FGGY kinase family.

It catalyses the reaction glycerol + ATP = sn-glycerol 3-phosphate + ADP + H(+). It participates in polyol metabolism; glycerol degradation via glycerol kinase pathway; sn-glycerol 3-phosphate from glycerol: step 1/1. Key enzyme in the regulation of glycerol uptake and metabolism. Catalyzes the phosphorylation of glycerol to yield sn-glycerol 3-phosphate. It also catalyzes the phosphorylation of dihydroxyacetone (DHA). Involved, together with the DHA kinase DhaKLM, in the metabolism of DHA. In Haloferax volcanii (strain ATCC 29605 / DSM 3757 / JCM 8879 / NBRC 14742 / NCIMB 2012 / VKM B-1768 / DS2) (Halobacterium volcanii), this protein is Glycerol kinase.